The following is a 253-amino-acid chain: Carboxy-S-adenosyl-L-methionine synthase (253 aa).

Residues Tyr49, 74–76, 98–99, and Asn141 each bind S-adenosyl-L-methionine; these read GCS and DN.

This sequence belongs to the class I-like SAM-binding methyltransferase superfamily. Cx-SAM synthase family.

The enzyme catalyses prephenate + S-adenosyl-L-methionine = carboxy-S-adenosyl-L-methionine + 3-phenylpyruvate + H2O. Catalyzes the conversion of S-adenosyl-L-methionine (SAM) to carboxy-S-adenosyl-L-methionine (Cx-SAM). This Trichodesmium erythraeum (strain IMS101) protein is Carboxy-S-adenosyl-L-methionine synthase.